Here is a 236-residue protein sequence, read N- to C-terminus: Uridylate kinase (236 aa).

Residue 10–13 (KLSG) coordinates ATP. A UMP-binding site is contributed by Gly-52. 2 residues coordinate ATP: Gly-53 and Arg-57. UMP is bound by residues Asp-72 and 133–140 (TGNPFFTT). The ATP site is built by Thr-160, Tyr-166, and Asp-169.

It belongs to the UMP kinase family. As to quaternary structure, homohexamer.

It is found in the cytoplasm. It carries out the reaction UMP + ATP = UDP + ADP. It participates in pyrimidine metabolism; CTP biosynthesis via de novo pathway; UDP from UMP (UMPK route): step 1/1. Its activity is regulated as follows. Inhibited by UTP. Its function is as follows. Catalyzes the reversible phosphorylation of UMP to UDP. In Polaromonas naphthalenivorans (strain CJ2), this protein is Uridylate kinase.